The following is a 427-amino-acid chain: Putative transporter YdfJ (427 aa).

The Cytoplasmic segment spans residues 1-7; it reads MDFQLYS. The next 2 helical transmembrane spans lie at 8 to 28 and 29 to 49; these read LGAALVFHEIFFPESSTAMAL and ILAMGTYGAGYVARIVGAFIF. Residues 50 to 74 lie on the Cytoplasmic side of the membrane; it reads GKMGDRIGRKKVLFITITMMGICTT. The helical transmembrane segment at 75 to 95 threads the bilayer; sequence LIGVLPTYAQIGVFAPILLVT. At 96 to 97 the chain is on the periplasmic side; that stretch reads LR. The chain crosses the membrane as a helical span at residues 98-118; the sequence is IIQGLGAGAEISGAGTMLAEY. The Cytoplasmic segment spans residues 119–132; it reads APKGKRGIISSFVA. The chain crosses the membrane as a helical span at residues 133 to 153; the sequence is MGTNCGTLSATAIWAFMFFIL. Topologically, residues 154–157 are periplasmic; the sequence is SKEE. Residues 158–178 form a helical membrane-spanning segment; the sequence is LLAWGWRIPFLASVVVMVFAI. Residues 179–225 are Cytoplasmic-facing; it reads WLRMNLKESPVFEKVNDSNQPTAKPAPAGSMFQSKSFWLATGLRFGQ. A helical transmembrane segment spans residues 226–246; sequence AGNSGLIQTFLAGYLVQTLLF. The Periplasmic portion of the chain corresponds to 247–251; sequence NKAIP. A helical membrane pass occupies residues 252–272; the sequence is TDALMISSILGFMTIPFLGWL. The Cytoplasmic portion of the chain corresponds to 273-279; that stretch reads SDKIGRR. The chain crosses the membrane as a helical span at residues 280–300; sequence IPYIIMNTSAIVLAWPMLSII. Residues 301-307 lie on the Periplasmic side of the membrane; sequence VDKSYAP. The chain crosses the membrane as a helical span at residues 308 to 328; that stretch reads STIMVALIVIHNCAVLGLFAL. Over 329-351 the chain is Cytoplasmic; sequence ENITMAEMFGCKNRFTRMAISKE. The helical transmembrane segment at 352–372 threads the bilayer; sequence IGGLIASGFGPILAGIFCTMT. Residue glutamate 373 is a topological domain, periplasmic. The helical transmembrane segment at 374–394 threads the bilayer; that stretch reads SWYPIAIMIMAYSVIGLISAL. Residues 395–427 are Cytoplasmic-facing; that stretch reads KMPEVKDRDLSALEDAAEDQPRVVRAAQPSRSL.

Belongs to the major facilitator superfamily. Metabolite:H+ Symporter (MHS) family (TC 2.A.1.6) family.

The protein localises to the cell inner membrane. Its function is as follows. When overexpressed in human HEK-293 cells forms an inward rectifying potassium channel. This Escherichia coli (strain K12) protein is Putative transporter YdfJ (ydfJ).